A 243-amino-acid chain; its full sequence is MNINKQSPIPIYYQIMEQLKTQIKNGELQPDMPLPSEREYAEQFGISRMTVRQALSNLVNEGLLYRLKGRGTFVSKPKMEQALQGLTSFTEDMKSRGMTPGSRLIDYQLIDSTEELAAILGCGHPSSIHKITRVRLANDIPMAIESSHIPFELAGELNESHFQSSIYDHIERYNSIPISRAKQELEPSAATTEEANILGIQKGAPVLLIKRTTYLQNGTAFEHAKSVYRGDRYTFVHYMDRLS.

Positions I9–P77 constitute an HTH gntR-type domain. The segment at residues E37–S56 is a DNA-binding region (H-T-H motif). Alpha-D-glucosamine 6-phosphate-binding positions include F89 to T90, R133 to R135, E145, S165 to Y167, E222, and Y228. N-acetyl-D-glucosamine 6-phosphate is bound by residues F89–T90, R133–R135, E145, S165–Y167, E222, and Y228.

Homodimer. Forms dimers via the C-terminal effector-binding domain. At high concentrations, probably forms polymers along the DNA.

Binding to DNA is allosterically inhibited by an effector molecule. Binding of the effector to the C-terminal domain leads to a conformational change that modulates binding to DNA and thereby regulates transcription of the target genes. Glucosamine-6-phosphate (GlcN6P) and/or N-acetylglucosamine-6-phosphate (GlcNAc6P) are putative effectors of NagR. Binding of GlcNAc6P may prevent the protein-protein interactions responsible for polymerization along the DNA, but not the specific DNA binding. Its function is as follows. Main transcriptional repressor of genes involved in N-acetylglucosamine (GlcNAc) transport and utilization. Represses the expression of the nagAB and nagP operons by binding directly within their upstream regions. Binds to the DNA consensus sequence 5'-ATTGGTATAGACAACT-3'. Also acts as a weak repressor of mapB expression. This is HTH-type transcriptional repressor NagR from Bacillus subtilis (strain 168).